A 456-amino-acid chain; its full sequence is NAD-dependent deacetylase sir2C (456 aa).

In terms of domain architecture, Deacetylase sirtuin-type spans 161–443 (IEIENNKIKE…LNLSKLLNWD (283 aa)). His294 (proton acceptor) is an active-site residue. Residues Cys302, Cys305, Cys331, and Cys336 each contribute to the Zn(2+) site.

Belongs to the sirtuin family. Zn(2+) serves as cofactor.

The catalysed reaction is N(6)-acetyl-L-lysyl-[protein] + NAD(+) + H2O = 2''-O-acetyl-ADP-D-ribose + nicotinamide + L-lysyl-[protein]. NAD-dependent deacetylase, which plays an important role in the regulation of transcriptional repression. This Dictyostelium discoideum (Social amoeba) protein is NAD-dependent deacetylase sir2C (sir2C).